A 425-amino-acid polypeptide reads, in one-letter code: SrfA-induced gene G protein (425 aa).

N-linked (GlcNAc...) asparagine glycosylation is found at asparagine 25, asparagine 28, and asparagine 36. Coiled coils occupy residues 41 to 91 (RDSE…RIRN), 172 to 208 (HEKQ…MKRT), and 292 to 340 (KFGQ…NYNI). The chain crosses the membrane as a helical span at residues 91-113 (NVFKVLITILVGSIIYGTYTNQF). The tract at residues 393–413 (KKPHADSNGHPKPYPHHHLLN) is disordered.

Its subcellular location is the membrane. In Dictyostelium discoideum (Social amoeba), this protein is SrfA-induced gene G protein (sigG).